The primary structure comprises 100 residues: MELTPREKDKLLLFTAGLVAERRLAKGLKLNYPESVALISCAIMEGAREGKTVAQLMSEGRAVLTAEQVMEGIPEMIKDIQVECTFPDGTKLVSIHDPIV.

This sequence belongs to the urease gamma subunit family. In terms of assembly, heterotrimer of UreA (gamma), UreB (beta) and UreC (alpha) subunits. Three heterotrimers associate to form the active enzyme.

It localises to the cytoplasm. It catalyses the reaction urea + 2 H2O + H(+) = hydrogencarbonate + 2 NH4(+). It participates in nitrogen metabolism; urea degradation; CO(2) and NH(3) from urea (urease route): step 1/1. The sequence is that of Urease subunit gamma from Proteus hauseri.